Reading from the N-terminus, the 118-residue chain is MASQTQGIQQLLQAEKRAAEKVADARKRKARRLKQAKEEAQMEVEQYRREREQEFQSKQQAAMGSQGNLSAEVEQATRRQVQGMQSSQQRNRERVLAQLLGMVCEVRPQVHPNYRVTV.

Positions 23-91 (ADARKRKARR…QGMQSSQQRN (69 aa)) are disordered. Residues 35–55 (QAKEEAQMEVEQYRREREQEF) show a composition bias toward basic and acidic residues. Composition is skewed to polar residues over residues 56-69 (QSKQ…QGNL) and 78-89 (RRQVQGMQSSQQ).

This sequence belongs to the V-ATPase G subunit family. In terms of assembly, V-ATPase is a heteromultimeric enzyme made up of two complexes: the ATP-hydrolytic V1 complex and the proton translocation V0 complex. The V1 complex consists of three catalytic AB heterodimers that form a heterohexamer, three peripheral stalks each consisting of EG heterodimers, one central rotor including subunits D and F, and the regulatory subunits C and H. The proton translocation complex V0 consists of the proton transport subunit a, a ring of proteolipid subunits c9c'', rotary subunit d, subunits e and f, and the accessory subunits ATP6AP1/Ac45 and ATP6AP2/PRR.

The protein resides in the melanosome. The protein localises to the cytoplasmic vesicle. It localises to the clathrin-coated vesicle membrane. Its function is as follows. Subunit of the V1 complex of vacuolar(H+)-ATPase (V-ATPase), a multisubunit enzyme composed of a peripheral complex (V1) that hydrolyzes ATP and a membrane integral complex (V0) that translocates protons. V-ATPase is responsible for acidifying and maintaining the pH of intracellular compartments and in some cell types, is targeted to the plasma membrane, where it is responsible for acidifying the extracellular environment. This Mus musculus (Mouse) protein is V-type proton ATPase subunit G 2 (Atp6v1g2).